The chain runs to 336 residues: Ketoreductase adrE (336 aa).

Position 171 (tyrosine 171) interacts with NADP(+).

The protein belongs to the NAD(P)-dependent epimerase/dehydratase family. Dihydroflavonol-4-reductase subfamily.

Its pathway is secondary metabolite biosynthesis; terpenoid biosynthesis. Functionally, ketoreductase; part of the gene cluster that mediates the biosynthesis of andrastins, meroterpenoid compounds that exhibit inhibitory activity against ras farnesyltransferase, suggesting that they could be promising leads for antitumor agents. The first step of the pathway is the synthesis of 3,5-dimethylorsellinic acid (DMOA) by the polyketide synthase adrD via condensation of one acetyl-CoA starter unit with 3 malonyl-CoA units and 2 methylations. DMAO is then converted to farnesyl-DMAO by the prenyltransferase adrG. The methyltransferase adrK catalyzes the methylation of the carboxyl group of farnesyl-DMAO to farnesyl-DMAO methyl ester which is further converted to epoxyfarnesyl-DMAO methyl ester by the FAD-dependent monooxygenase adrH. The terpene cyclase adrI then catalyzes the carbon skeletal rearrangement to generate the andrastin E, the first compound in the pathway having the andrastin scaffold, with the tetracyclic ring system. The post-cyclization tailoring enzymes adrF, adrE, adrJ, and adrA, are involved in the conversion of andrastin E into andrastin A. The short chain dehydrogenase adrF is responsible for the oxidation of the C-3 a hydroxyl group of andrastin E to yield the corresponding ketone, andrastin D. The ketoreductase adrE stereoselectively reduces the carbonyl moiety to reverse the stereochemistry of the C-3 position to yield andrastin F. The acetyltransferase adrJ is the acetyltransferase that attaches the acetyl group to the C-3 hydroxyl group of andrastin F to yield andrastin C. Finally, the cytochrome P450 monooxygenase adrA catalyzes two sequential oxidation reactions of the C-23 methyl group, to generate the corresponding alcohol andrastin B, and aldehyde andrastin A. The polypeptide is Ketoreductase adrE (Penicillium rubens (strain ATCC 28089 / DSM 1075 / NRRL 1951 / Wisconsin 54-1255) (Penicillium chrysogenum)).